A 326-amino-acid chain; its full sequence is Sulfate/thiosulfate import ATP-binding protein CysA (326 aa).

Residues 3 to 237 (IEVRNVSKNF…PSNDFVYHFL (235 aa)) enclose the ABC transporter domain. An ATP-binding site is contributed by 35 to 42 (GPSGCGKT).

This sequence belongs to the ABC transporter superfamily. Sulfate/tungstate importer (TC 3.A.1.6) family. In terms of assembly, the complex is composed of two ATP-binding proteins (CysA), two transmembrane proteins (CysT and CysW) and a solute-binding protein (CysP).

Its subcellular location is the cell inner membrane. The catalysed reaction is sulfate(out) + ATP + H2O = sulfate(in) + ADP + phosphate + H(+). The enzyme catalyses thiosulfate(out) + ATP + H2O = thiosulfate(in) + ADP + phosphate + H(+). Its function is as follows. Part of the ABC transporter complex CysAWTP involved in sulfate/thiosulfate import. Responsible for energy coupling to the transport system. This is Sulfate/thiosulfate import ATP-binding protein CysA from Pseudomonas syringae pv. tomato (strain ATCC BAA-871 / DC3000).